A 473-amino-acid chain; its full sequence is Purple acid phosphatase 1 (473 aa).

Positions 1–38 (MRLVVVGLWCLILGLILNPTKFCDAGVTSSYVRKSLSA) are cleaved as a signal peptide. N118 carries N-linked (GlcNAc...) asparagine glycosylation. D172 lines the Fe cation pocket. N-linked (GlcNAc...) asparagine glycosylation occurs at N180. Fe cation-binding residues include D201 and Y204. D201 lines the Mn(2+) pocket. N238 contributes to the Mn(2+) binding site. N238 is a binding site for substrate. The N-linked (GlcNAc...) asparagine glycan is linked to N311. Position 323 (H323) interacts with Mn(2+). H333 acts as the Proton donor in catalysis. A Mn(2+)-binding site is contributed by H360. 360-362 (HVH) contributes to the substrate binding site. H362 contacts Fe cation. N433 carries N-linked (GlcNAc...) asparagine glycosylation.

It belongs to the metallophosphoesterase superfamily. Purple acid phosphatase family. Homodimer; disulfide-linked. Fe cation is required as a cofactor. It depends on Mn(2+) as a cofactor. Zn(2+) serves as cofactor. Requires Cu(2+) as cofactor. The cofactor is Mg(2+).

It is found in the secreted. It catalyses the reaction a phosphate monoester + H2O = an alcohol + phosphate. This chain is Purple acid phosphatase 1 (PAP1), found in Ipomoea batatas (Sweet potato).